A 306-amino-acid chain; its full sequence is Ornithine carbamoyltransferase (306 aa).

Residues 51–54, Gln78, Arg102, and 129–132 contribute to the carbamoyl phosphate site; these read STRT and HPCQ. L-ornithine contacts are provided by residues Asn160, Asp223, and 227–228; that span reads SM. Residues 263–264 and Arg291 contribute to the carbamoyl phosphate site; that span reads CL.

Belongs to the aspartate/ornithine carbamoyltransferase superfamily. OTCase family.

Its subcellular location is the cytoplasm. It carries out the reaction carbamoyl phosphate + L-ornithine = L-citrulline + phosphate + H(+). It functions in the pathway amino-acid biosynthesis; L-arginine biosynthesis; L-arginine from L-ornithine and carbamoyl phosphate: step 1/3. Its function is as follows. Reversibly catalyzes the transfer of the carbamoyl group from carbamoyl phosphate (CP) to the N(epsilon) atom of ornithine (ORN) to produce L-citrulline. The chain is Ornithine carbamoyltransferase from Trichormus variabilis (strain ATCC 29413 / PCC 7937) (Anabaena variabilis).